Reading from the N-terminus, the 647-residue chain is 1-deoxy-D-xylulose-5-phosphate synthase (647 aa).

Thiamine diphosphate contacts are provided by residues His-74 and 115–117 (GHS). Asp-146 lines the Mg(2+) pocket. Residues 147-148 (GA), Asn-175, Tyr-286, and Glu-367 each bind thiamine diphosphate. Position 175 (Asn-175) interacts with Mg(2+).

Belongs to the transketolase family. DXPS subfamily. As to quaternary structure, homodimer. Mg(2+) serves as cofactor. Requires thiamine diphosphate as cofactor.

It catalyses the reaction D-glyceraldehyde 3-phosphate + pyruvate + H(+) = 1-deoxy-D-xylulose 5-phosphate + CO2. The protein operates within metabolic intermediate biosynthesis; 1-deoxy-D-xylulose 5-phosphate biosynthesis; 1-deoxy-D-xylulose 5-phosphate from D-glyceraldehyde 3-phosphate and pyruvate: step 1/1. In terms of biological role, catalyzes the acyloin condensation reaction between C atoms 2 and 3 of pyruvate and glyceraldehyde 3-phosphate to yield 1-deoxy-D-xylulose-5-phosphate (DXP). This is 1-deoxy-D-xylulose-5-phosphate synthase from Heliobacterium modesticaldum (strain ATCC 51547 / Ice1).